We begin with the raw amino-acid sequence, 278 residues long: Phosphatidylglycerol--prolipoprotein diacylglyceryl transferase (278 aa).

Helical transmembrane passes span 12–32 (FGPLTLRWYGLLIAMAVLIGL), 44–64 (LENGLISDLLPLLVLFSVIGA), 86–106 (IWEGGIAIHGALIAGTLTLIL), and 113–133 (QPFLDVLDVLAPSVALGQAIG). An a 1,2-diacyl-sn-glycero-3-phospho-(1'-sn-glycerol)-binding site is contributed by arginine 134. The next 3 membrane-spanning stretches (helical) occupy residues 173–193 (PTFLYESIWNLLLFVLLLVLF), 203–223 (FPAGTLSCVYLIGYSLGRIWI), and 246–266 (IAQLMSAMLMVLGGLGLWWLK).

Belongs to the Lgt family.

It is found in the cell inner membrane. It carries out the reaction L-cysteinyl-[prolipoprotein] + a 1,2-diacyl-sn-glycero-3-phospho-(1'-sn-glycerol) = an S-1,2-diacyl-sn-glyceryl-L-cysteinyl-[prolipoprotein] + sn-glycerol 1-phosphate + H(+). It functions in the pathway protein modification; lipoprotein biosynthesis (diacylglyceryl transfer). Functionally, catalyzes the transfer of the diacylglyceryl group from phosphatidylglycerol to the sulfhydryl group of the N-terminal cysteine of a prolipoprotein, the first step in the formation of mature lipoproteins. This is Phosphatidylglycerol--prolipoprotein diacylglyceryl transferase from Parasynechococcus marenigrum (strain WH8102).